We begin with the raw amino-acid sequence, 216 residues long: Orotate phosphoribosyltransferase (216 aa).

5-phospho-alpha-D-ribose 1-diphosphate-binding positions include Arg101, Lys105, His107, and 127-135 (EDLISTGGS). Position 131 (Ser131) interacts with orotate.

The protein belongs to the purine/pyrimidine phosphoribosyltransferase family. PyrE subfamily. Homodimer. Mg(2+) is required as a cofactor.

The enzyme catalyses orotidine 5'-phosphate + diphosphate = orotate + 5-phospho-alpha-D-ribose 1-diphosphate. It participates in pyrimidine metabolism; UMP biosynthesis via de novo pathway; UMP from orotate: step 1/2. Functionally, catalyzes the transfer of a ribosyl phosphate group from 5-phosphoribose 1-diphosphate to orotate, leading to the formation of orotidine monophosphate (OMP). The polypeptide is Orotate phosphoribosyltransferase (Cutibacterium acnes (strain DSM 16379 / KPA171202) (Propionibacterium acnes)).